A 668-amino-acid chain; its full sequence is Ankyrin repeat domain-containing protein OPG023 (668 aa).

9 ANK repeats span residues Phe31–Lys64, Asn101–Val131, Lys135–Tyr166, Tyr199–Ser231, Asn235–Tyr266, Arg277–Ile311, Asn334–Lys368, Arg458–Ile487, and Asn491–Cys521. A PRANC/F-box-like region spans residues Gly586–Glu666.

It belongs to the orthopoxvirus OPG023 family. Interacts (via N-terminus) with host RELA. Interacts (via PRANC/F-box-like domain) with the SKP1 component of the host SCF ubiquitin ligase complex.

Functionally, substrate-specific adapter of SKP1-containing E3 ubiquitin-protein ligases which mediate the ubiquitination and subsequent proteasomal degradation of host target proteins. Prevents activation and subsequent nuclear localization of NF-kappa-B in infected cells, by targeting NF-kappa-B RELA subunit to the SCF E3 ligase complex. This Bos taurus (Bovine) protein is Ankyrin repeat domain-containing protein OPG023 (OPG023).